The sequence spans 62 residues: Small ribosomal subunit protein bS21 (62 aa).

The segment at 43-62 is disordered; that stretch reads EKRKRKAMALQKQRKRRSRY. Over residues 44–62 the composition is skewed to basic residues; the sequence is KRKRKAMALQKQRKRRSRY.

This sequence belongs to the bacterial ribosomal protein bS21 family.

This is Small ribosomal subunit protein bS21 from Trichodesmium erythraeum (strain IMS101).